Consider the following 377-residue polypeptide: Lipoyl synthase, mitochondrial (377 aa).

7 residues coordinate [4Fe-4S] cluster: C98, C103, C109, C128, C132, C135, and S343. Residues 113 to 332 (KKSEATATIM…RDTALDMGFL (220 aa)) form the Radical SAM core domain.

Belongs to the radical SAM superfamily. Lipoyl synthase family. It depends on [4Fe-4S] cluster as a cofactor.

Its subcellular location is the mitochondrion. The enzyme catalyses [[Fe-S] cluster scaffold protein carrying a second [4Fe-4S](2+) cluster] + N(6)-octanoyl-L-lysyl-[protein] + 2 oxidized [2Fe-2S]-[ferredoxin] + 2 S-adenosyl-L-methionine + 4 H(+) = [[Fe-S] cluster scaffold protein] + N(6)-[(R)-dihydrolipoyl]-L-lysyl-[protein] + 4 Fe(3+) + 2 hydrogen sulfide + 2 5'-deoxyadenosine + 2 L-methionine + 2 reduced [2Fe-2S]-[ferredoxin]. It participates in protein modification; protein lipoylation via endogenous pathway; protein N(6)-(lipoyl)lysine from octanoyl-[acyl-carrier-protein]: step 2/2. Catalyzes the radical-mediated insertion of two sulfur atoms into the C-6 and C-8 positions of the octanoyl moiety bound to the lipoyl domains of lipoate-dependent enzymes, thereby converting the octanoylated domains into lipoylated derivatives. In Candida tropicalis (strain ATCC MYA-3404 / T1) (Yeast), this protein is Lipoyl synthase, mitochondrial.